A 499-amino-acid polypeptide reads, in one-letter code: Glutelin type-A 2 (499 aa).

A signal peptide spans 1-24 (MASINRPIVFFTVCLFLLCDGSLA). 2 disulfides stabilise this stretch: Cys-46/Cys-79 and Cys-122/Cys-313. One can recognise a Cupin type-1 1 domain in the interval 51 to 248 (LQAFEPIRSV…AFGISNQVAR (198 aa)). The tract at residues 280 to 300 (EQGQMQSREHYQEGGYQQSQY) is disordered. The 150-residue stretch at 319-468 (QNIDNPNRAD…AYRISREEAQ (150 aa)) folds into the Cupin type-1 2 domain.

Belongs to the 11S seed storage protein (globulins) family. In terms of assembly, hexamer; each subunit is composed of an acidic and a basic chain derived from a single precursor and linked by a disulfide bond.

In terms of biological role, seed storage protein. The chain is Glutelin type-A 2 (GLUA2) from Oryza sativa subsp. japonica (Rice).